Reading from the N-terminus, the 229-residue chain is Ribosome maturation factor RimM (229 aa).

Residues methionine 1–valine 21 form a disordered region. The PRC barrel domain maps to alanine 148–tyrosine 229.

This sequence belongs to the RimM family. Binds ribosomal protein uS19.

It localises to the cytoplasm. An accessory protein needed during the final step in the assembly of 30S ribosomal subunit, possibly for assembly of the head region. Essential for efficient processing of 16S rRNA. May be needed both before and after RbfA during the maturation of 16S rRNA. It has affinity for free ribosomal 30S subunits but not for 70S ribosomes. The sequence is that of Ribosome maturation factor RimM from Burkholderia pseudomallei (strain 1106a).